The following is a 209-amino-acid chain: MSSTSSTNTDDFITIARIQKTQGRVGEVFSELFTDFPELFEQRHHLYVLPEKGERRELELEDHWFHKGGVVLKFQGIETIDDAEKLLRSEVQIPRQDRAQLEEGATYVSDLVGCELFEIHGSEARKVGVVADVDFSAGEAPLLVVKGDREHLIPYVESFLKSTDFKAKRIEMVLPQGMLELDAPLSKAEKERQKSEADETREAGERRKR.

Residues 103-178 form the PRC barrel domain; it reads EGATYVSDLV…RIEMVLPQGM (76 aa). Residues 184–209 form a disordered region; that stretch reads PLSKAEKERQKSEADETREAGERRKR. Over residues 187-209 the composition is skewed to basic and acidic residues; it reads KAEKERQKSEADETREAGERRKR.

This sequence belongs to the RimM family. In terms of assembly, binds ribosomal protein uS19.

It localises to the cytoplasm. An accessory protein needed during the final step in the assembly of 30S ribosomal subunit, possibly for assembly of the head region. Essential for efficient processing of 16S rRNA. May be needed both before and after RbfA during the maturation of 16S rRNA. It has affinity for free ribosomal 30S subunits but not for 70S ribosomes. The chain is Ribosome maturation factor RimM from Koribacter versatilis (strain Ellin345).